The following is a 274-amino-acid chain: N-acetylmuramic acid 6-phosphate etherase (274 aa).

One can recognise an SIS domain in the interval 54-217; that stretch reads IIPRIDSGGR…STSVMIKLGR (164 aa). The active-site Proton donor is the glutamate 82. Residue glutamate 113 is part of the active site.

The protein belongs to the GCKR-like family. MurNAc-6-P etherase subfamily. Homodimer.

The enzyme catalyses N-acetyl-D-muramate 6-phosphate + H2O = N-acetyl-D-glucosamine 6-phosphate + (R)-lactate. It functions in the pathway amino-sugar metabolism; N-acetylmuramate degradation. Specifically catalyzes the cleavage of the D-lactyl ether substituent of MurNAc 6-phosphate, producing GlcNAc 6-phosphate and D-lactate. This Christiangramia forsetii (strain DSM 17595 / CGMCC 1.15422 / KT0803) (Gramella forsetii) protein is N-acetylmuramic acid 6-phosphate etherase.